A 340-amino-acid polypeptide reads, in one-letter code: Phosphoribosylformylglycinamidine cyclo-ligase (340 aa).

It belongs to the AIR synthase family.

The protein localises to the cytoplasm. It catalyses the reaction 2-formamido-N(1)-(5-O-phospho-beta-D-ribosyl)acetamidine + ATP = 5-amino-1-(5-phospho-beta-D-ribosyl)imidazole + ADP + phosphate + H(+). It functions in the pathway purine metabolism; IMP biosynthesis via de novo pathway; 5-amino-1-(5-phospho-D-ribosyl)imidazole from N(2)-formyl-N(1)-(5-phospho-D-ribosyl)glycinamide: step 2/2. The chain is Phosphoribosylformylglycinamidine cyclo-ligase from Streptococcus pneumoniae (strain P1031).